The following is a 499-amino-acid chain: Maturase K (499 aa).

The protein belongs to the intron maturase 2 family. MatK subfamily.

Its subcellular location is the plastid. It localises to the chloroplast. Its function is as follows. Usually encoded in the trnK tRNA gene intron. Probably assists in splicing its own and other chloroplast group II introns. This chain is Maturase K, found in Camellia sasanqua (Christmas camellia).